The primary structure comprises 282 residues: Glycine betaine/carnitine transport permease protein GbuB (282 aa).

Helical transmembrane passes span 44–64 (VFDL…TFWV), 70–90 (KWGL…LDFW), 99–119 (LVLT…IWMA), 140–160 (AFVY…PGVV), 220–240 (IMLA…GLGT), and 251–271 (AGGG…LDRL). Positions 93 to 272 (MTQTLTLVLT…IVAIILDRLT (180 aa)) constitute an ABC transmembrane type-1 domain.

Belongs to the binding-protein-dependent transport system permease family. As to quaternary structure, the complex is composed of two ATP-binding proteins (GbuA), two transmembrane proteins (GbuB) and a solute-binding protein (GbuC).

The protein localises to the cell membrane. The complex is activated by an osmotic gradient or by low temperature. Its function is as follows. Part of the ABC transporter complex GbuABC involved in glycine betaine uptake. Responsible for the translocation of the substrate across the membrane. Involved, with BetL and OpuC, in osmoprotection and cryoprotection of Listeria. Can also uptake carnitine when carnitine is abundant in the growth medium. In Listeria monocytogenes serotype 1/2a (strain 10403S), this protein is Glycine betaine/carnitine transport permease protein GbuB (gbuB).